Consider the following 154-residue polypeptide: Deoxyuridine 5'-triphosphate nucleotidohydrolase (154 aa).

Residues Arg72–Gly74, Asn85, Leu89–Asp91, and Met99 each bind substrate.

This sequence belongs to the dUTPase family. Requires Mg(2+) as cofactor.

The enzyme catalyses dUTP + H2O = dUMP + diphosphate + H(+). It functions in the pathway pyrimidine metabolism; dUMP biosynthesis; dUMP from dCTP (dUTP route): step 2/2. Functionally, this enzyme is involved in nucleotide metabolism: it produces dUMP, the immediate precursor of thymidine nucleotides and it decreases the intracellular concentration of dUTP so that uracil cannot be incorporated into DNA. The polypeptide is Deoxyuridine 5'-triphosphate nucleotidohydrolase (Psychrobacter arcticus (strain DSM 17307 / VKM B-2377 / 273-4)).